The primary structure comprises 264 residues: Hemin import ATP-binding protein HmuV (264 aa).

The ABC transporter domain maps to I2–A241. ATP is bound at residue G34 to T41.

It belongs to the ABC transporter superfamily. Heme (hemin) importer (TC 3.A.1.14.5) family. In terms of assembly, the complex is composed of two ATP-binding proteins (HmuV), two transmembrane proteins (HmuU) and a solute-binding protein (HmuT).

Its subcellular location is the cell inner membrane. Its function is as follows. Part of the ABC transporter complex HmuTUV involved in hemin import. Responsible for energy coupling to the transport system. This chain is Hemin import ATP-binding protein HmuV, found in Rhizobium etli (strain ATCC 51251 / DSM 11541 / JCM 21823 / NBRC 15573 / CFN 42).